The chain runs to 182 residues: Adenylate kinase (182 aa).

Glycine 12–threonine 17 is a binding site for ATP. The NMP stretch occupies residues serine 32 to valine 61. AMP-binding positions include threonine 33, arginine 38, glutamate 59 to valine 61, glycine 85 to arginine 88, and glutamine 92. Residues leucine 126 to aspartate 132 form an LID region. Residue arginine 127 participates in ATP binding. 2 residues coordinate AMP: arginine 129 and arginine 140. Arginine 168 is a binding site for ATP.

This sequence belongs to the adenylate kinase family. In terms of assembly, monomer.

It is found in the cytoplasm. It catalyses the reaction AMP + ATP = 2 ADP. It participates in purine metabolism; AMP biosynthesis via salvage pathway; AMP from ADP: step 1/1. Functionally, catalyzes the reversible transfer of the terminal phosphate group between ATP and AMP. Plays an important role in cellular energy homeostasis and in adenine nucleotide metabolism. This chain is Adenylate kinase, found in Prochlorococcus marinus (strain AS9601).